The chain runs to 127 residues: Small ribosomal subunit protein uS11 (127 aa).

It belongs to the universal ribosomal protein uS11 family. In terms of assembly, part of the 30S ribosomal subunit. Interacts with proteins S7 and S18. Binds to IF-3.

Its function is as follows. Located on the platform of the 30S subunit, it bridges several disparate RNA helices of the 16S rRNA. Forms part of the Shine-Dalgarno cleft in the 70S ribosome. This is Small ribosomal subunit protein uS11 from Streptococcus thermophilus (strain CNRZ 1066).